Reading from the N-terminus, the 354-residue chain is MKLQTTYPSNNYPIYVEHGAIDHISTYIDQFDQSFILIDEHVNQYFADKFDDILSYENVHKVIIPAGEKTKTFEQYQETLEYILSHHVTRNTAIIAVGGGATGDFAGFIAATLLRGVHFIQVPTTILAHDSSVGGKVGINSKQGKNLIGAFYRPTAVIYDLVFLKTLPFEQILSGYAEVYKHALLNGESATQDIEQHFKDREILQSLNGMDKYIAKGIETKLDIVIADEKEQGVRKFLNLGHTFGHAVEYYHKIPHGHAVMVGIIYQFIVANALFDSKHDINHYIQYLIQLGYPLDMITDLDFETLYQYMLSDKKNDKQGVQMVLIRQFGDIVVQHVDQLTLQHACEQLKTYFK.

NAD(+) is bound by residues 100-104 (GATGD), 124-125 (TT), Lys136, Lys145, and 163-166 (FLKT). The Zn(2+) site is built by Glu178, His242, and His256.

The protein belongs to the sugar phosphate cyclases superfamily. Dehydroquinate synthase family. Requires Co(2+) as cofactor. The cofactor is Zn(2+). NAD(+) serves as cofactor.

It is found in the cytoplasm. It catalyses the reaction 7-phospho-2-dehydro-3-deoxy-D-arabino-heptonate = 3-dehydroquinate + phosphate. It functions in the pathway metabolic intermediate biosynthesis; chorismate biosynthesis; chorismate from D-erythrose 4-phosphate and phosphoenolpyruvate: step 2/7. Its function is as follows. Catalyzes the conversion of 3-deoxy-D-arabino-heptulosonate 7-phosphate (DAHP) to dehydroquinate (DHQ). The polypeptide is 3-dehydroquinate synthase (Staphylococcus aureus (strain NCTC 8325 / PS 47)).